The primary structure comprises 249 residues: Segregation and condensation protein A (249 aa).

Belongs to the ScpA family. Component of a cohesin-like complex composed of ScpA, ScpB and the Smc homodimer, in which ScpA and ScpB bind to the head domain of Smc. The presence of the three proteins is required for the association of the complex with DNA.

The protein resides in the cytoplasm. In terms of biological role, participates in chromosomal partition during cell division. May act via the formation of a condensin-like complex containing Smc and ScpB that pull DNA away from mid-cell into both cell halves. This Listeria welshimeri serovar 6b (strain ATCC 35897 / DSM 20650 / CCUG 15529 / CIP 8149 / NCTC 11857 / SLCC 5334 / V8) protein is Segregation and condensation protein A.